The chain runs to 80 residues: uncharacterized protein (80 aa).

This sequence to B.cereus similar ORF in glnR 5'region.

This is an uncharacterized protein from Bacillus cereus.